We begin with the raw amino-acid sequence, 494 residues long: Xylan glycosyltransferase MUCI21 (494 aa).

Residues 1 to 40 (MRQNLKKVAQIKVDESKKLFPYVFRVKTSCGNCAKRSKPK) lie on the Cytoplasmic side of the membrane. The helical; Signal-anchor for type II membrane protein transmembrane segment at 41–61 (LIYLLIFSLISSCFVFAPQLL) threads the bilayer. Residues 62–494 (CFPYPSALFL…LIDAYAKSIR (433 aa)) are Lumenal-facing. Asparagine 375 carries N-linked (GlcNAc...) asparagine glycosylation.

It belongs to the glycosyltransferase 61 family.

The protein resides in the golgi apparatus membrane. Glycosyletransferase required for the proper composition and structural properties of released seed coat mucilage. Required for the production of highly branched xylan polymers in seed coat mucilage. Facilitates the addition of xylose residues directly to the xylan backbone. Xylan with xylose side chains seems to be necessary for pectin attachment to the seed surface. Essential for xylan synthesis in seed coat epidermal (SCE) cells. The protein is Xylan glycosyltransferase MUCI21 of Arabidopsis thaliana (Mouse-ear cress).